The primary structure comprises 327 residues: Chlorophenol reductase (327 aa).

A signal peptide spans 1–24 (MKKTLGIILSISLAFSVLALPIFA). Residues 65-110 (TYYTVVSGDFFWQIAAKHGLTIDALAKLNPQIKNVNLIFPGQKILV) form the LysM domain.

Cob(I)alamin serves as cofactor.

The protein resides in the secreted. Its subcellular location is the cell wall. It is found in the cell membrane. With respect to regulation, inhibited by sulfide and to a lesser extent by nitrite. Reductive dechlorination of ortho-chlorophenols. Dechlorinates in the ortho position with respect to the hydroxyl group. The sequence is that of Chlorophenol reductase from Desulfitobacterium hafniense (Desulfitobacterium frappieri).